We begin with the raw amino-acid sequence, 637 residues long: Sec1 family domain-containing protein 1 (637 aa).

Phosphoserine occurs at positions 32, 298, and 523.

The protein belongs to the STXBP/unc-18/SEC1 family. As to quaternary structure, interacts with STX17. Interacts with the COG complex via COG4. Interacts with STX5A. In terms of tissue distribution, highly expressed in testis. Detected at lower levels in brain, astrocytes, heart and small intestine.

The protein localises to the cytoplasm. It is found in the endoplasmic reticulum membrane. Its subcellular location is the golgi apparatus. The protein resides in the golgi stack membrane. Its function is as follows. Plays a role in SNARE-pin assembly and Golgi-to-ER retrograde transport via its interaction with COG4. Involved in vesicular transport between the endoplasmic reticulum and the Golgi. This Rattus norvegicus (Rat) protein is Sec1 family domain-containing protein 1 (Scfd1).